Reading from the N-terminus, the 447-residue chain is MTPSLKRLSGAMRARPAPALSGTIKAPGDKSISHRAFILGGLAKGVTEVTGLLESDDVINSGRAAAALGAKVEHLGPGHWRIDGCGGQWTTPSAPLDFGNAGTGVRLMMGAVAGTGTSADFIGDESLSSRPMRRVTDPLGEMGARFTTTGGRLPAHLDGGPLAGIHYTPPIASAQVKSAVLLAALGATGTTVVHEPQITRDHTETMLRAFGVTLTVERDGAAATVTLTGPQTLIACPVDVPGDPSSSAFAIVAALISPGSDITLEGVMDNPARTGLIETLKEMGADITLTPGPDMAGEKTMHIHVKHSQLHGITVPATRAPSMIDEYPVLCVAAAYADGITHMPGLEELRAKESDRLAGSAAMLRANGVPVEEGEDSLAVTGMGIGGVPGGGRTVTHHDHRLAMSGLVIGLGAKAASSVDDIAMIATSYPDFFDHIATLGGRLEPLT.

A disordered region spans residues 1–22 (MTPSLKRLSGAMRARPAPALSG). 3-phosphoshikimate is bound by residues lysine 30, serine 31, and arginine 35. Lysine 30 contacts phosphoenolpyruvate. Phosphoenolpyruvate contacts are provided by glycine 102 and arginine 130. Serine 173, glutamine 175, aspartate 325, and lysine 352 together coordinate 3-phosphoshikimate. A phosphoenolpyruvate-binding site is contributed by glutamine 175. Catalysis depends on aspartate 325, which acts as the Proton acceptor. Residues arginine 356 and arginine 401 each coordinate phosphoenolpyruvate.

The protein belongs to the EPSP synthase family. As to quaternary structure, monomer.

Its subcellular location is the cytoplasm. It carries out the reaction 3-phosphoshikimate + phosphoenolpyruvate = 5-O-(1-carboxyvinyl)-3-phosphoshikimate + phosphate. It participates in metabolic intermediate biosynthesis; chorismate biosynthesis; chorismate from D-erythrose 4-phosphate and phosphoenolpyruvate: step 6/7. Its function is as follows. Catalyzes the transfer of the enolpyruvyl moiety of phosphoenolpyruvate (PEP) to the 5-hydroxyl of shikimate-3-phosphate (S3P) to produce enolpyruvyl shikimate-3-phosphate and inorganic phosphate. This chain is 3-phosphoshikimate 1-carboxyvinyltransferase, found in Maricaulis maris (strain MCS10) (Caulobacter maris).